Consider the following 331-residue polypeptide: UBX domain-containing protein 2B (331 aa).

Basic and acidic residues-rich tracts occupy residues 1–16 (MAEGGRAEPEEQERGS) and 37–48 (DEMKCKSSKPDR). Residues 1–70 (MAEGGRAEPE…PHRLYSGDHK (70 aa)) form a disordered region. Alanine 2 carries the post-translational modification N-acetylalanine. Serine 56 bears the Phosphoserine mark. The residue at position 59 (threonine 59) is a Phosphothreonine. A Phosphoserine modification is found at serine 66. The region spanning 141–206 (DVQVLLKLWR…MEDHQDQEYI (66 aa)) is the SEP domain. Phosphoserine is present on residues serine 231, serine 234, and serine 235. One can recognise a UBX domain in the interval 252-329 (DSMPTTKIQI…DILNTVILQQ (78 aa)).

This sequence belongs to the NSFL1C family. Interacts with VCP. Does not bind ubiquitin.

The protein resides in the nucleus. Its subcellular location is the cytoplasm. It localises to the cytosol. The protein localises to the endoplasmic reticulum. It is found in the golgi apparatus. The protein resides in the cytoskeleton. Its subcellular location is the microtubule organizing center. It localises to the centrosome. Its function is as follows. Adapter protein required for Golgi and endoplasmic reticulum biogenesis. Involved in Golgi and endoplasmic reticulum maintenance during interphase and in their reassembly at the end of mitosis. The complex formed with VCP has membrane fusion activity; membrane fusion activity requires USO1-GOLGA2 tethering and BET1L. VCPIP1 is also required, but not its deubiquitinating activity. Together with NSFL1C/p47, regulates the centrosomal levels of kinase AURKA/Aurora A during mitotic progression by promoting AURKA removal from centrosomes in prophase. Also, regulates spindle orientation during mitosis. The protein is UBX domain-containing protein 2B (Ubxn2b) of Mus musculus (Mouse).